Reading from the N-terminus, the 59-residue chain is Large ribosomal subunit protein bL32 (59 aa).

The segment at 1-59 is disordered; it reads MAVQQNKKSPSKRGMHRSHDFLTTAPIAVEPTTGEVHLRHHVSPNGYYRGRKVVKTKND. Over residues 49-59 the composition is skewed to basic residues; the sequence is RGRKVVKTKND.

This sequence belongs to the bacterial ribosomal protein bL32 family.

This is Large ribosomal subunit protein bL32 from Ralstonia pickettii (strain 12J).